We begin with the raw amino-acid sequence, 320 residues long: Heterogeneous nuclear ribonucleoprotein A1 (320 aa).

The residue at position 1 (M1) is an N-acetylmethionine. S2 carries the N-acetylserine; in Heterogeneous nuclear ribonucleoprotein A1, N-terminally processed modification. The residue at position 2 (S2) is a Phosphoserine. Residue K3 is modified to N6-acetyllysine; alternate. K3 participates in a covalent cross-link: Glycyl lysine isopeptide (Lys-Gly) (interchain with G-Cter in SUMO2); alternate. S4 and S6 each carry phosphoserine. Positions 4 to 94 are globular A domain; it reads SESPKEPEQL…EPKRAVSRED (91 aa). A Glycyl lysine isopeptide (Lys-Gly) (interchain with G-Cter in SUMO2) cross-link involves residue K8. 2 RRM domains span residues 14-97 and 105-184; these read RKLF…DSQR and KKIF…LSKQ. S22 carries the post-translational modification Phosphoserine. A Glycyl lysine isopeptide (Lys-Gly) (interchain with G-Cter in SUMO2) cross-link involves residue K78. Residues 95 to 185 form a globular B domain region; sequence SQRPGAHLTV…EVRKALSKQE (91 aa). K113 is covalently cross-linked (Glycyl lysine isopeptide (Lys-Gly) (interchain with G-Cter in SUMO)). Glycyl lysine isopeptide (Lys-Gly) (interchain with G-Cter in SUMO2) cross-links involve residues K179 and K183. The segment at 182–216 is disordered; the sequence is SKQEMASASSSQRGRSGSGNFGGGRGGGFGGNDNF. A Phosphoserine; by MKNK2 modification is found at S192. Asymmetric dimethylarginine; alternate is present on R194. The residue at position 194 (R194) is a Dimethylated arginine; alternate. R194 bears the Omega-N-methylarginine; alternate mark. The span at 197–216 shows a compositional bias: gly residues; sequence SGSGNFGGGRGGGFGGNDNF. S199 carries the phosphoserine modification. An asymmetric dimethylarginine; alternate mark is found at R206, R218, R225, and R232. Residue R206 is modified to Dimethylated arginine; alternate. Omega-N-methylarginine; alternate is present on residues R206, R218, R225, and R232. The interval 218-240 is RNA-binding RGG-box; sequence RGGNFSGRGGFGGSRGGGGYGGS. R225 carries the post-translational modification Dimethylated arginine; alternate. Positions 268-305 are nuclear targeting sequence; it reads NQSSNFGPMKGGNFGGRSSGPYGGGGQYFAKPRNQGGY. Residues 274–320 are disordered; sequence GPMKGGNFGGRSSGPYGGGGQYFAKPRNQGGYGGSSSSSSYGSGRRF. Over residues 276-294 the composition is skewed to gly residues; that stretch reads MKGGNFGGRSSGPYGGGGQ. R284 is modified (omega-N-methylarginine). S285 bears the Phosphoserine mark. An N6-acetyllysine; alternate modification is found at K298. K298 is covalently cross-linked (Glycyl lysine isopeptide (Lys-Gly) (interchain with G-Cter in SUMO2); alternate). The residue at position 300 (R300) is an Omega-N-methylarginine. Over residues 308-320 the composition is skewed to low complexity; sequence SSSSSSYGSGRRF. At S309 the chain carries Phosphoserine. Residues S310, S311, and S312 each carry the phosphoserine; by MKNK2 modification. Residues S313 and S316 each carry the phosphoserine modification. An Omega-N-methylarginine modification is found at R318.

Identified in the spliceosome C complex. Identified in a IGF2BP1-dependent mRNP granule complex containing untranslated mRNAs. Interacts with SEPT6. Interacts with C9orf72. Interacts with KHDRBS1. Interacts with UBQLN2. Interacts with PPIA/CYPA. In terms of processing, sumoylated.

The protein resides in the nucleus. Its subcellular location is the cytoplasm. Involved in the packaging of pre-mRNA into hnRNP particles, transport of poly(A) mRNA from the nucleus to the cytoplasm and modulation of splice site selection. Plays a role in the splicing of pyruvate kinase PKM by binding repressively to sequences flanking PKM exon 9, inhibiting exon 9 inclusion and resulting in exon 10 inclusion and production of the PKM M2 isoform. Binds to the IRES and thereby inhibits the translation of the apoptosis protease activating factor APAF1. May bind to specific miRNA hairpins. The chain is Heterogeneous nuclear ribonucleoprotein A1 (Hnrnpa1) from Mus musculus (Mouse).